A 312-amino-acid chain; its full sequence is MSPESKKITAHGSTSMPLSRTSKPQKFTIPLTVGAIFSVIGFLQRFFLASGKGDVQSLYTLSTMFILGAGPTYAGADYFICGRLFSFVPSAAPMSPIRVVRTFITFDVLAEVCVWTGAGLLAGAHTDTAARYKIGLNLIRAAMITQAFLFTSFVAILASFHVRVCALRAEWSVTSNGGTGRRFMMVVHSLYASSIFIIIRSAYHIAGHSFRTNEQPFLICEASLMLLNTAMFNVFHPGHILPIDSRVYVGIDGQERANETIEGAFTDSRPLLQKILDPLDVKGLFSRDKKRWHDPTAELEMDINSTLYAALT.

The disordered stretch occupies residues methionine 1 to threonine 21. Residues histidine 11–threonine 21 are compositionally biased toward polar residues. A run of 6 helical transmembrane segments spans residues isoleucine 29–alanine 49, leucine 61–cysteine 81, phenylalanine 103–glycine 123, alanine 142–valine 162, phenylalanine 183–tyrosine 203, and serine 223–isoleucine 243. 2 N-linked (GlcNAc...) asparagine glycosylation sites follow: asparagine 258 and asparagine 304.

This sequence belongs to the lipid-translocating exporter (LTE) (TC 9.A.26.1) family.

It is found in the membrane. Its pathway is siderophore biosynthesis. In terms of biological role, lipid-translocating exporter-like protein; part of the gene cluster that mediates the biosynthesis of hydroxamate-containing siderophores that play a critical role in virulence via intracellular iron acquisition during macrophage infection. This is Lipid-translocating exporter-like protein RTA1 from Ajellomyces capsulatus (Darling's disease fungus).